A 439-amino-acid polypeptide reads, in one-letter code: Perilipin-3 (439 aa).

Over residues 1–19 (MFASETEASASSTQVTTEE) the composition is skewed to low complexity. Positions 1–26 (MFASETEASASSTQVTTEEPVQQPSV) are disordered. The residue at position 66 (lysine 66) is an N6-acetyllysine. Serine 92 is modified (phosphoserine). Residue lysine 123 forms a Glycyl lysine isopeptide (Lys-Gly) (interchain with G-Cter in SUMO1) linkage. The residue at position 131 (serine 131) is a Phosphoserine. Threonine 175 bears the Phosphothreonine mark. 2 positions are modified to phosphoserine: serine 180 and serine 184. Threonine 221 is subject to Phosphothreonine. Phosphoserine occurs at positions 222 and 246. Coiled coils occupy residues 254–282 (RAYEHSLGKLQHTRQRAQEALLQLSQALS) and 358–381 (AHVKEQALQARRQVEDLQATFSGM). Position 256 is a phosphotyrosine (tyrosine 256).

It belongs to the perilipin family. As to quaternary structure, homooligomer. Interacts with M6PR (via the cytoplasmic domain). Interacts with IGF2R (via the cytoplasmic domain). Post-translationally, phosphorylation at Tyr-256 by isoform 1 of CHKA (CHKalpha2) promotes dissociation from lipid droplets: dissociation is followed by recruitment of autophagosome machinery to lipid droplets and subsequent lipid droplet lipolysis.

It is found in the lipid droplet. The protein localises to the endosome membrane. It localises to the cytoplasm. Its function is as follows. Structural component of lipid droplets, which is required for the formation and maintenance of lipid storage droplets. Required for the transport of mannose 6-phosphate receptors (MPR) from endosomes to the trans-Golgi network. This Sus scrofa (Pig) protein is Perilipin-3 (PLIN3).